A 64-amino-acid polypeptide reads, in one-letter code: Large ribosomal subunit protein bL35 (64 aa).

The disordered stretch occupies residues 1 to 23 (MPKMKTHRGAAKRFKKTKNKIKR).

It belongs to the bacterial ribosomal protein bL35 family.

The protein is Large ribosomal subunit protein bL35 of Nitratiruptor sp. (strain SB155-2).